The following is a 40-amino-acid chain: Photosystem II reaction center protein J (40 aa).

The helical transmembrane segment at 8–28 (IPLWLIGTVTGIIVIGLLGVF) threads the bilayer.

The protein belongs to the PsbJ family. In terms of assembly, PSII is composed of 1 copy each of membrane proteins PsbA, PsbB, PsbC, PsbD, PsbE, PsbF, PsbH, PsbI, PsbJ, PsbK, PsbL, PsbM, PsbT, PsbX, PsbY, PsbZ, Psb30/Ycf12, at least 3 peripheral proteins of the oxygen-evolving complex and a large number of cofactors. It forms dimeric complexes.

It is found in the plastid. The protein resides in the chloroplast thylakoid membrane. In terms of biological role, one of the components of the core complex of photosystem II (PSII). PSII is a light-driven water:plastoquinone oxidoreductase that uses light energy to abstract electrons from H(2)O, generating O(2) and a proton gradient subsequently used for ATP formation. It consists of a core antenna complex that captures photons, and an electron transfer chain that converts photonic excitation into a charge separation. The protein is Photosystem II reaction center protein J of Pinus thunbergii (Japanese black pine).